Here is a 336-residue protein sequence, read N- to C-terminus: Fructose-1,6-bisphosphatase class 1 (336 aa).

Residues glutamate 90, aspartate 112, leucine 114, and aspartate 115 each coordinate Mg(2+). Residues 115–118 (DGSS), asparagine 211, and lysine 277 contribute to the substrate site. Glutamate 283 contributes to the Mg(2+) binding site.

This sequence belongs to the FBPase class 1 family. As to quaternary structure, homotetramer. The cofactor is Mg(2+).

The protein localises to the cytoplasm. The enzyme catalyses beta-D-fructose 1,6-bisphosphate + H2O = beta-D-fructose 6-phosphate + phosphate. It participates in carbohydrate biosynthesis; gluconeogenesis. This is Fructose-1,6-bisphosphatase class 1 from Pseudomonas fluorescens (strain ATCC BAA-477 / NRRL B-23932 / Pf-5).